The sequence spans 506 residues: Ribose import ATP-binding protein RbsA (506 aa).

ABC transporter domains lie at leucine 5–arginine 241 and arginine 254–valine 498. Residue glycine 37–serine 44 participates in ATP binding.

Belongs to the ABC transporter superfamily. Ribose importer (TC 3.A.1.2.1) family. As to quaternary structure, the complex is composed of an ATP-binding protein (RbsA), two transmembrane proteins (RbsC) and a solute-binding protein (RbsB).

The protein localises to the cell inner membrane. The enzyme catalyses D-ribose(out) + ATP + H2O = D-ribose(in) + ADP + phosphate + H(+). Its function is as follows. Part of the ABC transporter complex RbsABC involved in ribose import. Responsible for energy coupling to the transport system. In Burkholderia mallei (strain ATCC 23344), this protein is Ribose import ATP-binding protein RbsA.